The chain runs to 477 residues: Sucrose-6-phosphate hydrolase (477 aa).

Residues 36–39 (WMND), glutamine 55, tryptophan 63, 98–99 (FS), 160–161 (RD), glutamate 215, and tryptophan 298 each bind substrate. Aspartate 39 is a catalytic residue.

The protein belongs to the glycosyl hydrolase 32 family.

The protein localises to the cytoplasm. The catalysed reaction is Hydrolysis of terminal non-reducing beta-D-fructofuranoside residues in beta-D-fructofuranosides.. Its pathway is glycan biosynthesis; sucrose metabolism. Functionally, enables the bacterium to metabolize sucrose as a sole carbon source. In Escherichia coli, this protein is Sucrose-6-phosphate hydrolase (cscA).